Here is a 62-residue protein sequence, read N- to C-terminus: Kurtoxin-like I (62 aa).

Residues I2 to N62 enclose the LCN-type CS-alpha/beta domain. Intrachain disulfides connect C12–C61, C16–C37, C23–C44, and C27–C46.

Expressed by the venom gland.

The protein resides in the secreted. Its function is as follows. This neurotoxin acts on sodium and calcium channels. Potently inhibits native voltage-gated T-type calcium channel activity in mouse male germ cells and weakly blocks Cav3.3/CACNA1I channels expressed in Xenopus oocytes. In addition, significantly slows the inactivation of activated recombinant sodium channels (Nav1.5/SCN5A). In Parabuthus granulatus (Granulated thick-tailed scorpion), this protein is Kurtoxin-like I.